The chain runs to 452 residues: Probable cysteine protease RD21C (452 aa).

The first 29 residues, 1–29 (MATSIKSITLALLIFSVLLISLSLGSVTA), serve as a signal peptide directing secretion. The propeptide at 30 to 128 (TETTRNEAEA…EKYLYKVGDS (99 aa)) is activation peptide. Asn-82 carries N-linked (GlcNAc...) asparagine glycosylation. Disulfide bonds link Cys-150-Cys-192, Cys-184-Cys-226, Cys-284-Cys-335, Cys-363-Cys-375, and Cys-369-Cys-390. The active site involves Cys-153. Active-site residues include His-290 and Asn-310. A propeptide spans 346–452 (KSSGSNPPKP…KSTNMLVGSA (107 aa)) (removed in mature form).

Belongs to the peptidase C1 family. As to quaternary structure, interacts with WSCP.

In terms of biological role, probable thiol protease. This chain is Probable cysteine protease RD21C, found in Arabidopsis thaliana (Mouse-ear cress).